Here is a 734-residue protein sequence, read N- to C-terminus: MATRFPKFSQGLSKDPTTRRIWYGIATAHDFESHDGITEEKLYQKIFASHFGQLAVIFLWTSGNLFHVAWQGNFEQWVQDPLHVRPIAHAIWDPHFGQPAVEAFTRGGASGPVNIAYSGVYQWWFTIGMRTNLDLYRGALFLLFLSTLALLAGWLHLQPKWKPSVSWFKNAESRLNHHLSGLFGVSSLAWSGHLVHVAIPEARGQHVRWDNFLTSIPHPQGLQPFFTGNWSIYAQDPDSMNHLFGTSEGAGTAILTFLGGFHPQTQSLWLTDIAHHHLAIAILFIVAGHMYRTNFGIGHSIKEILEAHTPPGGRLGRGHNGLYDTLNNSLHFQLGLALASLGVITSLVAQHMYSLPAYAFIAQDFTTQAALYTHHQYIAGFIMVGAFAHGAIFFIRDYNPEENKENVLARMLEHKEAIISHLSWASLFLGFHTLGLYVHNDVMQAFGTPEKQILIEPVFAQWIQATHGKTLYGFDVLLSSNQSPALNAGANLWLPGWLDAINNGNNSLFLTIGPGDFLVHHAIALGLHTTTLILVKGALDARGSKLMPDKKEFGYSFPCDGPGRGGTCDISAWDAFYLAVFWMLNTIGWVTFYWHWKHITLWQGNVSQFNESSTYLMGWLRDYLWLNSSQLINGYNPLGMNSLSVWAWMFLFGHLIWATGFMFLISWRGYWQELIETLAWAHERTPLANLIRWKDKPVALSIVQARLVGLSHFSVGYIFTYAAFLIASTSAKFG.

8 consecutive transmembrane segments (helical) span residues 46–69 (IFASHFGQLAVIFLWTSGNLFHVA), 135–158 (LYRGALFLLFLSTLALLAGWLHLQ), 175–199 (LNHHLSGLFGVSSLAWSGHLVHVAI), 273–291 (IAHHHLAIAILFIVAGHMY), 330–353 (LHFQLGLALASLGVITSLVAQHMY), 369–395 (AALYTHHQYIAGFIMVGAFAHGAIFFI), 417–439 (AIISHLSWASLFLGFHTLGLYVH), and 517–535 (FLVHHAIALGLHTTTLILV). [4Fe-4S] cluster contacts are provided by Cys-559 and Cys-568. 2 helical membrane passes run 575–596 (AFYLAVFWMLNTIGWVTFYWHW) and 643–665 (LSVWAWMFLFGHLIWATGFMFLI). Residues His-654, Met-662, and Tyr-670 each contribute to the chlorophyll a site. Trp-671 contributes to the phylloquinone binding site. Residues 707-727 (LVGLSHFSVGYIFTYAAFLIA) form a helical membrane-spanning segment.

Belongs to the PsaA/PsaB family. The PsaA/B heterodimer binds the P700 chlorophyll special pair and subsequent electron acceptors. PSI consists of a core antenna complex that captures photons, and an electron transfer chain that converts photonic excitation into a charge separation. The eukaryotic PSI reaction center is composed of at least 11 subunits. The cofactor is P700 is a chlorophyll a/chlorophyll a' dimer, A0 is one or more chlorophyll a, A1 is one or both phylloquinones and FX is a shared 4Fe-4S iron-sulfur center..

It localises to the plastid. Its subcellular location is the chloroplast thylakoid membrane. It catalyses the reaction reduced [plastocyanin] + hnu + oxidized [2Fe-2S]-[ferredoxin] = oxidized [plastocyanin] + reduced [2Fe-2S]-[ferredoxin]. In terms of biological role, psaA and PsaB bind P700, the primary electron donor of photosystem I (PSI), as well as the electron acceptors A0, A1 and FX. PSI is a plastocyanin-ferredoxin oxidoreductase, converting photonic excitation into a charge separation, which transfers an electron from the donor P700 chlorophyll pair to the spectroscopically characterized acceptors A0, A1, FX, FA and FB in turn. Oxidized P700 is reduced on the lumenal side of the thylakoid membrane by plastocyanin. This chain is Photosystem I P700 chlorophyll a apoprotein A2, found in Chara vulgaris (Common stonewort).